A 152-amino-acid polypeptide reads, in one-letter code: Cuticle protein 64 (152 aa).

7 consecutive repeat copies span residues 27 to 30, 33 to 37, 39 to 42, 86 to 89, 92 to 95, 98 to 101, and 127 to 130.

Functionally, component of the cuticle of migratory locust which contains more than 100 different structural proteins. This is Cuticle protein 64 from Locusta migratoria (Migratory locust).